The sequence spans 450 residues: 3-phosphoshikimate 1-carboxyvinyltransferase (450 aa).

3-phosphoshikimate contacts are provided by Lys28, Ser29, and Arg33. Phosphoenolpyruvate is bound at residue Lys28. Positions 100 and 128 each coordinate phosphoenolpyruvate. Residues Ser173, Gln175, Asp326, and Lys353 each coordinate 3-phosphoshikimate. Position 175 (Gln175) interacts with phosphoenolpyruvate. The Proton acceptor role is filled by Asp326. 2 residues coordinate phosphoenolpyruvate: Arg357 and Arg402.

The protein belongs to the EPSP synthase family. In terms of assembly, monomer.

Its subcellular location is the cytoplasm. It carries out the reaction 3-phosphoshikimate + phosphoenolpyruvate = 5-O-(1-carboxyvinyl)-3-phosphoshikimate + phosphate. It functions in the pathway metabolic intermediate biosynthesis; chorismate biosynthesis; chorismate from D-erythrose 4-phosphate and phosphoenolpyruvate: step 6/7. Functionally, catalyzes the transfer of the enolpyruvyl moiety of phosphoenolpyruvate (PEP) to the 5-hydroxyl of shikimate-3-phosphate (S3P) to produce enolpyruvyl shikimate-3-phosphate and inorganic phosphate. This chain is 3-phosphoshikimate 1-carboxyvinyltransferase, found in Brucella melitensis biotype 1 (strain ATCC 23456 / CCUG 17765 / NCTC 10094 / 16M).